Here is a 681-residue protein sequence, read N- to C-terminus: MRQPLLKLAAVTRRFPAGDKDVVVLNNVNLSIGAGEIVAIVGASGSGKSTLMNILGCLDHPSEGTYTVGGRDTHMLDSDELAQLRREHFGFVFQRYHLLPHVDAVANLEMPAIYAGTPRADRHARARELLARLGLADRAHHRPGQLSGGQQQRVSIARALMNGGQVILADEPTGALDTKSGQDVIRILHELNALGHTIVIVTHDKAVARHARRIIEISDGEIVADRPNRHYAEAFAEVGVGAAATTETAADTRSAPASGDAPPPANNDTAADPAPAPDASPPAPAVSPKHAGWRGSRSCRTGCARCLTMLGIIIGITSVVSIVAVGEGAKRYMLEEIGSIGTNTISLYPGSDWGDSRADTIQTLVPADVAALAEQPYVDSATPETSRTLLLRYRNVDVHALVSGVGDSYFQTRGMRFALGVPFDDDAVRRQAQVAVIDQNTRRKLFGATRNPVGEAILVDNVPCVVIGVTADKKSAFGSVKSLNVWVPYTTASGRLFGQRYLDSITVRVRDGQPSAAAEKSLEKLMIQRHGRKDFFTYNMDSVVKTVEKTGQSLTLLLSLIAVISLVVGGIGVMNIMLVSVTERTREIGIRMAVGARQSDILQQFLVEAVLVCLLGGTIGIALSFGLGALFSVFVAQWKMVFSAGAIVTAFVCSTLTGVIFGFMPARNASRLDPIDALARD.

The region spanning 6-244 (LKLAAVTRRF…FAEVGVGAAA (239 aa)) is the ABC transporter domain. 42–49 (GASGSGKS) provides a ligand contact to ATP. The span at 246-273 (TETAADTRSAPASGDAPPPANNDTAADP) shows a compositional bias: low complexity. The tract at residues 246–298 (TETAADTRSAPASGDAPPPANNDTAADPAPAPDASPPAPAVSPKHAGWRGSRS) is disordered. The span at 274–285 (APAPDASPPAPA) shows a compositional bias: pro residues. 4 helical membrane-spanning segments follow: residues 306–326 (CLTMLGIIIGITSVVSIVAVG), 554–574 (LTLLLSLIAVISLVVGGIGVM), 611–631 (LVCLLGGTIGIALSFGLGALF), and 644–664 (AGAIVTAFVCSTLTGVIFGFM).

Belongs to the ABC transporter superfamily. Macrolide exporter (TC 3.A.1.122) family. In terms of assembly, homodimer.

It is found in the cell inner membrane. In terms of biological role, non-canonical ABC transporter that contains transmembrane domains (TMD), which form a pore in the inner membrane, and an ATP-binding domain (NBD), which is responsible for energy generation. Confers resistance against macrolides. The polypeptide is Macrolide export ATP-binding/permease protein MacB (Burkholderia orbicola (strain AU 1054)).